Reading from the N-terminus, the 721-residue chain is MQGQTQSISFDGREIRLTTGRYAPQAGGSVMMECGDTSVLVTATRSTGREGIDFLPLICDYEERLYAAGRIPGSFMRREGRPPERATLIARLIDRPMRPLFPSWMRDDLQIVATCLSLDERVPADVLAVTGASMATLLAGIPFQGPMAAVRVGLLGDDFVLNPSYREIERGDLDLVVAGTPDGVVMVEAGANQLPEGDVIEAIDFGYEAVCELIKAQQSILKDAGIKQVQPEPPTQDTKLSTYLEKNCSKSIGEVLKQFEQTKAERDSKLDAIKAKTAEAIDSLKEDDAVRKSVNANSKVLSNNFKALTKKLMREQIIKQGKRVDGRKLDEVRTITSAAGVLPKRVHGSGLFQRGLTQVLSTATLGTPSDAQEMDDLNPGPEKTYLHHYNFPPYSVGETRPMRSPGRREVGHGSLAERAIIPVLPPKDTFPYVLRVVSEVLSSNGSTSMGSVCGSTLALMDAGVPLKAPVSGAAMGLIKEDAEIRILTDIQGIEDFLGDMDFKVAGTKDGITALQMDMKITGLPVKTIAEAVNQARPARIHILEKMLEAIDAPRTSLSPHAPRLLSFRIDPELIGTVIGPGGRTIKGITERTNTKIDIEDGGIVTIASHDGAAAEAAQRIIEGLTRKVNEGEVFSGTITRIIPIGAFVEILPGKEGMIHISQLSEARVEKVDDVVKVGDEVTVRIREIDNRGRINLTLRGVPQNGEETQSEPAPTPVAPLN.

2 residues coordinate Mg(2+): aspartate 495 and aspartate 501. The 60-residue stretch at proline 562–isoleucine 621 folds into the KH domain. Positions glycine 631–arginine 699 constitute an S1 motif domain. The disordered stretch occupies residues glycine 700 to asparagine 721.

It belongs to the polyribonucleotide nucleotidyltransferase family. Mg(2+) serves as cofactor.

It localises to the cytoplasm. The catalysed reaction is RNA(n+1) + phosphate = RNA(n) + a ribonucleoside 5'-diphosphate. Its function is as follows. Involved in mRNA degradation. Catalyzes the phosphorolysis of single-stranded polyribonucleotides processively in the 3'- to 5'-direction. This Prochlorococcus marinus (strain MIT 9303) protein is Polyribonucleotide nucleotidyltransferase.